We begin with the raw amino-acid sequence, 207 residues long: Fibronectin type III domain-containing protein 5b (207 aa).

An N-terminal signal peptide occupies residues 1 to 26 (MWGIKGSFAVLLLLFLAYIFASSVNA). Residues 27 to 146 (DSLSAPLNVT…EEVGQAAQLR (120 aa)) lie on the Extracellular side of the membrane. A Fibronectin type-III domain is found at 31–122 (APLNVTIKAL…EPVLFRTPKE (92 aa)). Asn-34 and Asn-79 each carry an N-linked (GlcNAc...) asparagine glycan. Residues 147-167 (AGELIIIVVVLVMWAGVIALF) traverse the membrane as a helical segment. Over 168-207 (CRQYDIIKDNEPNNNKDKAKNSSECSTPEHPTGGLLRSKV) the chain is Cytoplasmic. Residues 178 to 188 (EPNNNKDKAKN) show a composition bias toward basic and acidic residues. The tract at residues 178–207 (EPNNNKDKAKNSSECSTPEHPTGGLLRSKV) is disordered. Positions 205 to 207 (SKV) match the Microbody targeting signal motif.

As to quaternary structure, dimer; may exist in other oligomeric forms. The extracellular domain is cleaved and released from the cell membrane.

It localises to the cell membrane. The protein localises to the peroxisome membrane. Its subcellular location is the secreted. Functionally, may mediate beneficial effects of muscular exercise. The chain is Fibronectin type III domain-containing protein 5b (fndc5b) from Danio rerio (Zebrafish).